A 328-amino-acid polypeptide reads, in one-letter code: DNA-directed RNA polymerase subunit alpha (328 aa).

The alpha N-terminal domain (alpha-NTD) stretch occupies residues 1-230; the sequence is MIQITGRKFK…IILDHFMFIE (230 aa). The segment at 257 to 328 is alpha C-terminal domain (alpha-CTD); the sequence is PEDVMSKKVE…FGLSLRKGDK (72 aa).

This sequence belongs to the RNA polymerase alpha chain family. Homodimer. The RNAP catalytic core consists of 2 alpha, 1 beta, 1 beta' and 1 omega subunit. When a sigma factor is associated with the core the holoenzyme is formed, which can initiate transcription.

It carries out the reaction RNA(n) + a ribonucleoside 5'-triphosphate = RNA(n+1) + diphosphate. Functionally, DNA-dependent RNA polymerase catalyzes the transcription of DNA into RNA using the four ribonucleoside triphosphates as substrates. In Fervidobacterium nodosum (strain ATCC 35602 / DSM 5306 / Rt17-B1), this protein is DNA-directed RNA polymerase subunit alpha.